Here is a 284-residue protein sequence, read N- to C-terminus: Putative ABC transporter ATP-binding protein SCO5958 (284 aa).

One can recognise an ABC transporter domain in the interval 15–250 (VALRGAAFAY…DLLRRAGLRL (236 aa)). 48-55 (GRNGSGKT) lines the ATP pocket.

The protein belongs to the ABC transporter superfamily.

The protein localises to the cell membrane. Its function is as follows. Probably part of an ABC transporter complex. Responsible for energy coupling to the transport system. In Streptomyces coelicolor (strain ATCC BAA-471 / A3(2) / M145), this protein is Putative ABC transporter ATP-binding protein SCO5958.